The sequence spans 299 residues: Probable lipid kinase YegS-like (299 aa).

One can recognise a DAGKc domain in the interval 2–133 (SRSAGSFLIL…IDIAHVNDKT (132 aa)). ATP is bound by residues T40, 66–72 (GDGTINE), and T95. Mg(2+) is bound by residues L215, D218, and L220. The active-site Proton acceptor is E271.

It belongs to the diacylglycerol/lipid kinase family. YegS lipid kinase subfamily. Mg(2+) is required as a cofactor. Ca(2+) serves as cofactor.

It localises to the cytoplasm. Functionally, probably phosphorylates lipids; the in vivo substrate is unknown. The sequence is that of Probable lipid kinase YegS-like from Cronobacter sakazakii (strain ATCC BAA-894) (Enterobacter sakazakii).